We begin with the raw amino-acid sequence, 289 residues long: Thioredoxin-like protein 1 (289 aa).

One can recognise a Thioredoxin domain in the interval 2–109 (VGVKPVGSDP…EEKIKQHLEN (108 aa)). A disulfide bond links C34 and C37. Phosphoserine is present on S113. Positions 115–285 (EDTDIPKGYM…NDFKRVVGKK (171 aa)) constitute a PITH domain.

Component of the 19S regulatory cap of the 26S proteasome. Interacts with PSMD14/RPN11. Interacts with, and reduces EEF1A1.

The protein resides in the cytoplasm. It is found in the nucleus. Its function is as follows. Active thioredoxin with a redox potential of about -250 mV. This chain is Thioredoxin-like protein 1 (Txnl1), found in Rattus norvegicus (Rat).